The chain runs to 256 residues: tRNA (guanine-N(7)-)-methyltransferase (256 aa).

The span at 1–11 shows a compositional bias: polar residues; the sequence is MHPQDASTEQT. A disordered region spans residues 1-35; the sequence is MHPQDASTEQTPVDDDQVESSQPVHAPEDVAHPRR. Residues Glu-85, Glu-110, Asp-137, and Asp-160 each coordinate S-adenosyl-L-methionine. Asp-160 is an active-site residue. Lys-164 contributes to the substrate binding site. The segment at 166–171 is interaction with RNA; sequence RHNKRR. Substrate contacts are provided by residues Asp-196 and 234–237; that span reads TKFE.

This sequence belongs to the class I-like SAM-binding methyltransferase superfamily. TrmB family.

The enzyme catalyses guanosine(46) in tRNA + S-adenosyl-L-methionine = N(7)-methylguanosine(46) in tRNA + S-adenosyl-L-homocysteine. It participates in tRNA modification; N(7)-methylguanine-tRNA biosynthesis. Its function is as follows. Catalyzes the formation of N(7)-methylguanine at position 46 (m7G46) in tRNA. This Cupriavidus pinatubonensis (strain JMP 134 / LMG 1197) (Cupriavidus necator (strain JMP 134)) protein is tRNA (guanine-N(7)-)-methyltransferase.